Reading from the N-terminus, the 345-residue chain is Protein-glutamate methylesterase/protein-glutamine glutaminase 2 (345 aa).

Positions 7 to 124 constitute a Response regulatory domain; sequence KVLVVDDSPV…TADMLGYRSL (118 aa). Aspartate 58 is subject to 4-aspartylphosphate. The CheB-type methylesterase domain occupies 154–345; sequence STSQYQLIAI…LPQFLCDLLS (192 aa). Catalysis depends on residues serine 166, histidine 192, and aspartate 289.

It belongs to the CheB family. Phosphorylated by CheA. Phosphorylation of the N-terminal regulatory domain activates the methylesterase activity.

The protein resides in the cytoplasm. The catalysed reaction is [protein]-L-glutamate 5-O-methyl ester + H2O = L-glutamyl-[protein] + methanol + H(+). The enzyme catalyses L-glutaminyl-[protein] + H2O = L-glutamyl-[protein] + NH4(+). In terms of biological role, involved in chemotaxis. Part of a chemotaxis signal transduction system that modulates chemotaxis in response to various stimuli. Catalyzes the demethylation of specific methylglutamate residues introduced into the chemoreceptors (methyl-accepting chemotaxis proteins or MCP) by CheR. Also mediates the irreversible deamidation of specific glutamine residues to glutamic acid. This is Protein-glutamate methylesterase/protein-glutamine glutaminase 2 from Vibrio vulnificus (strain YJ016).